A 128-amino-acid chain; its full sequence is Large ribosomal subunit protein uL22 (128 aa).

The segment at 1–22 is disordered; that stretch reads MARGHRSQIKRERNANKDTRPS. Basic and acidic residues predominate over residues 9–21; it reads IKRERNANKDTRP.

The protein belongs to the universal ribosomal protein uL22 family. As to quaternary structure, part of the 50S ribosomal subunit.

Its function is as follows. This protein binds specifically to 23S rRNA; its binding is stimulated by other ribosomal proteins, e.g. L4, L17, and L20. It is important during the early stages of 50S assembly. It makes multiple contacts with different domains of the 23S rRNA in the assembled 50S subunit and ribosome. The globular domain of the protein is located near the polypeptide exit tunnel on the outside of the subunit, while an extended beta-hairpin is found that lines the wall of the exit tunnel in the center of the 70S ribosome. This chain is Large ribosomal subunit protein uL22, found in Lachnoclostridium phytofermentans (strain ATCC 700394 / DSM 18823 / ISDg) (Clostridium phytofermentans).